Here is a 173-residue protein sequence, read N- to C-terminus: NADH-quinone oxidoreductase subunit I 2 (173 aa).

2 4Fe-4S ferredoxin-type domains span residues 41 to 73 (IVLT…LAKA) and 83 to 112 (EYFR…LTPD). Positions 53, 56, 59, 63, 92, 95, 98, and 102 each coordinate [4Fe-4S] cluster. A compositionally biased stretch (basic and acidic residues) spans 153 to 163 (GKDKGEAEHEA). A disordered region spans residues 153–173 (GKDKGEAEHEAPPVNLKGLLP).

It belongs to the complex I 23 kDa subunit family. In terms of assembly, NDH-1 is composed of 14 different subunits. Subunits NuoA, H, J, K, L, M, N constitute the membrane sector of the complex. [4Fe-4S] cluster is required as a cofactor.

It localises to the cell inner membrane. It catalyses the reaction a quinone + NADH + 5 H(+)(in) = a quinol + NAD(+) + 4 H(+)(out). Functionally, NDH-1 shuttles electrons from NADH, via FMN and iron-sulfur (Fe-S) centers, to quinones in the respiratory chain. The immediate electron acceptor for the enzyme in this species is believed to be ubiquinone. Couples the redox reaction to proton translocation (for every two electrons transferred, four hydrogen ions are translocated across the cytoplasmic membrane), and thus conserves the redox energy in a proton gradient. The protein is NADH-quinone oxidoreductase subunit I 2 of Rhodopseudomonas palustris (strain ATCC BAA-98 / CGA009).